Reading from the N-terminus, the 341-residue chain is HTH-type transcriptional repressor PurR (341 aa).

The 55-residue stretch at 2-56 (ATIKDVAKRAGVSTTTVSHVINKTRFVAEETKAAVGAAIKELHYSPSAVARSLKV) folds into the HTH lacI-type domain. The H-T-H motif DNA-binding region spans 4–23 (IKDVAKRAGVSTTTVSHVIN). A DNA-binding region spans residues 48 to 56 (SAVARSLKV). Positions 73, 190, 192, 221, and 275 each coordinate hypoxanthine.

As to quaternary structure, homodimer.

It participates in purine metabolism; purine nucleotide biosynthesis [regulation]. In terms of biological role, is the main repressor of the genes involved in the de novo synthesis of purine nucleotides, regulating purB, purC, purEK, purF, purHD, purL, purMN and guaBA expression. PurR is allosterically activated to bind its cognate DNA by binding the purine corepressors, hypoxanthine or guanine, thereby effecting transcription repression. This chain is HTH-type transcriptional repressor PurR, found in Serratia proteamaculans (strain 568).